We begin with the raw amino-acid sequence, 75 residues long: Exodeoxyribonuclease 7 small subunit (75 aa).

This sequence belongs to the XseB family. As to quaternary structure, heterooligomer composed of large and small subunits.

The protein resides in the cytoplasm. It catalyses the reaction Exonucleolytic cleavage in either 5'- to 3'- or 3'- to 5'-direction to yield nucleoside 5'-phosphates.. In terms of biological role, bidirectionally degrades single-stranded DNA into large acid-insoluble oligonucleotides, which are then degraded further into small acid-soluble oligonucleotides. The polypeptide is Exodeoxyribonuclease 7 small subunit (Anaplasma phagocytophilum (strain HZ)).